A 301-amino-acid chain; its full sequence is UDP-N-acetylenolpyruvoylglucosamine reductase (301 aa).

The FAD-binding PCMH-type domain maps to 29-195 (KIGGPADVFV…VEAIFSLTRG (167 aa)). Residue Arg174 is part of the active site. Residue Ser224 is the Proton donor of the active site. Residue Glu294 is part of the active site.

Belongs to the MurB family. FAD serves as cofactor.

It is found in the cytoplasm. It catalyses the reaction UDP-N-acetyl-alpha-D-muramate + NADP(+) = UDP-N-acetyl-3-O-(1-carboxyvinyl)-alpha-D-glucosamine + NADPH + H(+). Its pathway is cell wall biogenesis; peptidoglycan biosynthesis. In terms of biological role, cell wall formation. In Halalkalibacterium halodurans (strain ATCC BAA-125 / DSM 18197 / FERM 7344 / JCM 9153 / C-125) (Bacillus halodurans), this protein is UDP-N-acetylenolpyruvoylglucosamine reductase.